Here is an 84-residue protein sequence, read N- to C-terminus: Small ribosomal subunit protein uS17 (84 aa).

The protein belongs to the universal ribosomal protein uS17 family. As to quaternary structure, part of the 30S ribosomal subunit.

Functionally, one of the primary rRNA binding proteins, it binds specifically to the 5'-end of 16S ribosomal RNA. The sequence is that of Small ribosomal subunit protein uS17 from Clostridioides difficile (strain 630) (Peptoclostridium difficile).